Consider the following 344-residue polypeptide: tRNA N6-adenosine threonylcarbamoyltransferase (344 aa).

Positions 110 and 114 each coordinate Fe cation. Residues Val133 to Ala137, Asp166, Gly179, and Asn278 each bind substrate. Asp303 is a binding site for Fe cation.

The protein belongs to the KAE1 / TsaD family. Fe(2+) is required as a cofactor.

The protein resides in the cytoplasm. It catalyses the reaction L-threonylcarbamoyladenylate + adenosine(37) in tRNA = N(6)-L-threonylcarbamoyladenosine(37) in tRNA + AMP + H(+). Functionally, required for the formation of a threonylcarbamoyl group on adenosine at position 37 (t(6)A37) in tRNAs that read codons beginning with adenine. Is involved in the transfer of the threonylcarbamoyl moiety of threonylcarbamoyl-AMP (TC-AMP) to the N6 group of A37, together with TsaE and TsaB. TsaD likely plays a direct catalytic role in this reaction. The protein is tRNA N6-adenosine threonylcarbamoyltransferase of Chlamydia pneumoniae (Chlamydophila pneumoniae).